A 177-amino-acid chain; its full sequence is Large ribosomal subunit protein bL9 (177 aa).

Residues 151 to 177 form a disordered region; the sequence is EDEEIAEAAPVAEAQAEADGHSTEETA. A compositionally biased stretch (low complexity) spans 157–167; that stretch reads EAAPVAEAQAE. The segment covering 168–177 has biased composition (basic and acidic residues); the sequence is ADGHSTEETA.

Belongs to the bacterial ribosomal protein bL9 family.

Binds to the 23S rRNA. This Solidesulfovibrio magneticus (strain ATCC 700980 / DSM 13731 / RS-1) (Desulfovibrio magneticus) protein is Large ribosomal subunit protein bL9.